A 336-amino-acid chain; its full sequence is Fimbrial adhesin PapGII (336 aa).

Positions 1–20 (MKKWFPALLFSLCVSGESSA) are cleaved as a signal peptide. 2 disulfide bridges follow: Cys64-Cys138 and Cys217-Cys249. D-galactose-binding positions include Glu79 and 124–127 (GYKW).

This sequence belongs to the adhesin PapG family.

The protein resides in the secreted. It localises to the fimbrium. Tip adhesin component of type P pili that plays a critical role in kidney infection through targeted interaction with the globoseries glycolipids containing the Gal-alpha(1-4)-Gal disaccharide present on uroepithelial cells. In turn, transcriptionally regulates host gene expression in kidney cells, leading to inflammatory pathway activation and renal tissue damage. Acts thereby as key determinant of invasive uropathogenic E.coli (UPEC), which cause pyelonephritis and urinary-source bacteremia. The polypeptide is Fimbrial adhesin PapGII (Escherichia coli).